A 213-amino-acid polypeptide reads, in one-letter code: Uridine kinase (213 aa).

15 to 22 (GASASGKS) serves as a coordination point for ATP.

The protein belongs to the uridine kinase family.

The protein resides in the cytoplasm. It carries out the reaction uridine + ATP = UMP + ADP + H(+). The enzyme catalyses cytidine + ATP = CMP + ADP + H(+). It functions in the pathway pyrimidine metabolism; CTP biosynthesis via salvage pathway; CTP from cytidine: step 1/3. It participates in pyrimidine metabolism; UMP biosynthesis via salvage pathway; UMP from uridine: step 1/1. This Erwinia tasmaniensis (strain DSM 17950 / CFBP 7177 / CIP 109463 / NCPPB 4357 / Et1/99) protein is Uridine kinase.